A 612-amino-acid polypeptide reads, in one-letter code: Isocitrate dehydrogenase kinase/phosphatase (612 aa).

Residues 327–333 (APGIKGL) and Lys348 each bind ATP. Asp383 is a catalytic residue. The segment at 593–612 (AGRASPEPDAPADARSVRVA) is disordered.

It belongs to the AceK family.

Its subcellular location is the cytoplasm. It carries out the reaction L-seryl-[isocitrate dehydrogenase] + ATP = O-phospho-L-seryl-[isocitrate dehydrogenase] + ADP + H(+). Bifunctional enzyme which can phosphorylate or dephosphorylate isocitrate dehydrogenase (IDH) on a specific serine residue. This is a regulatory mechanism which enables bacteria to bypass the Krebs cycle via the glyoxylate shunt in response to the source of carbon. When bacteria are grown on glucose, IDH is fully active and unphosphorylated, but when grown on acetate or ethanol, the activity of IDH declines drastically concomitant with its phosphorylation. This chain is Isocitrate dehydrogenase kinase/phosphatase, found in Paraburkholderia phytofirmans (strain DSM 17436 / LMG 22146 / PsJN) (Burkholderia phytofirmans).